A 717-amino-acid chain; its full sequence is DNA-directed RNA polymerase subunit beta' (717 aa).

4 residues coordinate Zn(2+): cysteine 71, cysteine 73, cysteine 91, and cysteine 94. 3 residues coordinate Mg(2+): aspartate 481, aspartate 483, and aspartate 485.

It belongs to the RNA polymerase beta' chain family. RpoC1 subfamily. In terms of assembly, in plastids the minimal PEP RNA polymerase catalytic core is composed of four subunits: alpha, beta, beta', and beta''. When a (nuclear-encoded) sigma factor is associated with the core the holoenzyme is formed, which can initiate transcription. Requires Mg(2+) as cofactor. It depends on Zn(2+) as a cofactor.

The protein localises to the plastid. It is found in the chloroplast. It catalyses the reaction RNA(n) + a ribonucleoside 5'-triphosphate = RNA(n+1) + diphosphate. Functionally, DNA-dependent RNA polymerase catalyzes the transcription of DNA into RNA using the four ribonucleoside triphosphates as substrates. This Chlorokybus atmophyticus (Soil alga) protein is DNA-directed RNA polymerase subunit beta'.